Here is a 123-residue protein sequence, read N- to C-terminus: Small ribosomal subunit protein uS12 (123 aa).

Over residues 10 to 20 the composition is skewed to basic residues; that stretch reads KGRKKVKKKKT. A disordered region spans residues 10–32; that stretch reads KGRKKVKKKKTAPALQGSPQKRG. Position 89 is a 3-methylthioaspartic acid (Asp-89).

It belongs to the universal ribosomal protein uS12 family. As to quaternary structure, part of the 30S ribosomal subunit. Contacts proteins S8 and S17. May interact with IF1 in the 30S initiation complex.

Functionally, with S4 and S5 plays an important role in translational accuracy. In terms of biological role, interacts with and stabilizes bases of the 16S rRNA that are involved in tRNA selection in the A site and with the mRNA backbone. Located at the interface of the 30S and 50S subunits, it traverses the body of the 30S subunit contacting proteins on the other side and probably holding the rRNA structure together. The combined cluster of proteins S8, S12 and S17 appears to hold together the shoulder and platform of the 30S subunit. The sequence is that of Small ribosomal subunit protein uS12 from Halothermothrix orenii (strain H 168 / OCM 544 / DSM 9562).